The sequence spans 585 residues: Putative phospholipase B-like 2 (585 aa).

Residues 1 to 35 (MAAPMDRTHGGRAARALRRALALASLAGLLLSGLA) form the signal peptide. N-linked (GlcNAc...) asparagine glycosylation is found at Asn84, Asn102, and Asn106. A disulfide bridge links Cys138 with Cys148. Residues Asn227 and Asn432 are each glycosylated (N-linked (GlcNAc...) asparagine). Cys488 and Cys491 form a disulfide bridge. N-linked (GlcNAc...) asparagine glycosylation occurs at Asn511.

It belongs to the phospholipase B-like family. As to quaternary structure, interacts with IGF2R. Post-translationally, glycosylated; contains mannose 6-phosphate sugars.

The protein localises to the lysosome lumen. In terms of biological role, putative phospholipase. The polypeptide is Putative phospholipase B-like 2 (Plbd2) (Rattus norvegicus (Rat)).